We begin with the raw amino-acid sequence, 668 residues long: Transketolase 1 (668 aa).

His-26 is a substrate binding site. Residues His-66 and Gly-114–Leu-116 contribute to the thiamine diphosphate site. Asp-155 contacts Mg(2+). Thiamine diphosphate contacts are provided by Gly-156 and Asn-185. Mg(2+) is bound by residues Asn-185 and Ile-187. Residues His-261, Arg-358, and Ser-385 each contribute to the substrate site. His-261 lines the thiamine diphosphate pocket. The Proton donor role is filled by Glu-413. Phe-439 is a thiamine diphosphate binding site. Positions 463, 471, and 522 each coordinate substrate.

Belongs to the transketolase family. Homodimer. Mg(2+) is required as a cofactor. The cofactor is Ca(2+). Mn(2+) serves as cofactor. Requires Co(2+) as cofactor. It depends on thiamine diphosphate as a cofactor.

The enzyme catalyses D-sedoheptulose 7-phosphate + D-glyceraldehyde 3-phosphate = aldehydo-D-ribose 5-phosphate + D-xylulose 5-phosphate. In terms of biological role, catalyzes the transfer of a two-carbon ketol group from a ketose donor to an aldose acceptor, via a covalent intermediate with the cofactor thiamine pyrophosphate. The protein is Transketolase 1 (tktA) of Pasteurella multocida (strain Pm70).